Here is a 143-residue protein sequence, read N- to C-terminus: Ribonuclease H (143 aa).

Positions 1–136 (MQEIEIFCDG…CDSLAKLEAQ (136 aa)) constitute an RNase H type-1 domain. The Mg(2+) site is built by Asp-9, Glu-47, Asp-69, and Asp-128.

It belongs to the RNase H family. Monomer. Requires Mg(2+) as cofactor.

It is found in the cytoplasm. It carries out the reaction Endonucleolytic cleavage to 5'-phosphomonoester.. Its function is as follows. Endonuclease that specifically degrades the RNA of RNA-DNA hybrids. The polypeptide is Ribonuclease H (Helicobacter acinonychis (strain Sheeba)).